Reading from the N-terminus, the 62-residue chain is Defensin BmKDfsin5 (62 aa).

The signal sequence occupies residues 1–24 (MKVIALFFLFAFIFCTLEVAIVEA). Cystine bridges form between Cys28-Cys49, Cys35-Cys57, and Cys39-Cys59.

The protein belongs to the invertebrate defensin family. Type 2 subfamily. As to expression, highly expressed in non-venom gland (hemolymph) and moderately expressed in venom gland.

The protein resides in the secreted. Functionally, antibacterial peptide active against Gram-positive bacteria (including S.aureus ATCC25923 (MIC=2.5 uM), M.luteus AB93113 (MIC=2.5 uM), and the antibiotic-resistant S.epidermidis PRSE P1389 (MIC=1.25 uM)), but not against Gram-negative bacteria (including E.coli and P.aeruginosa). Also has weak blocking activity on Kv1.1/KCNA1 (8.7% inhibition), Kv1.2/KCNA2 (10.2% inhibition), Kv1.3/KCNA3 (9.0% inhibition), KCa3.1/KCNN4/IK (9.1% inhibition), KCa2.3/KCNN3/SK3 (46.3% inhibition) and Kv11.1/KCNH2/ERG1 (16.9% inhibition) channels (tested at 1 uM). It inhibits potassium channel current by interacting with the pore region. In Olivierus martensii (Manchurian scorpion), this protein is Defensin BmKDfsin5.